A 283-amino-acid chain; its full sequence is Putative casein kinase II subunit beta-4 (283 aa).

2 disordered regions span residues 1 to 23 (MYKD…EILG) and 35 to 92 (LDKH…SEGD). The span at 7 to 16 (GGGIMGGGGS) shows a compositional bias: gly residues. A compositionally biased stretch (polar residues) spans 58 to 70 (VPSTSTAKSQLHS).

Belongs to the casein kinase 2 subunit beta family. Heterotetramer of two catalytic alpha subunits and two regulatory beta subunits. Post-translationally, phosphorylated by alpha subunit.

It is found in the cytoplasm. It localises to the cytosol. Its function is as follows. Plays a complex role in regulating the basal catalytic activity of the alpha subunit. The tetrameric holoenzyme CK2, composed of two alpha and two beta subunits, phosphorylates the transcription factor PIF1 after an exposure to light, resulting in a proteasome-dependent degradation of PIF1 and promotion of photomorphogenesis. CK2 phosphorylates translation initiation factors. May participate in the regulation of the initiation of translation. This chain is Putative casein kinase II subunit beta-4, found in Arabidopsis thaliana (Mouse-ear cress).